We begin with the raw amino-acid sequence, 334 residues long: ELMO domain-containing protein 1 (334 aa).

The ELMO domain occupies 133–314 (QHEEMLLKLW…KFRKRIIKQL (182 aa)).

Acts as a GTPase-activating protein (GAP) toward guanine nucleotide exchange factors like ARL2, ARL3, ARF1 and ARF6, but not for GTPases outside the Arf family. This is ELMO domain-containing protein 1 (ELMOD1) from Homo sapiens (Human).